We begin with the raw amino-acid sequence, 150 residues long: Large-conductance mechanosensitive channel (150 aa).

2 helical membrane-spanning segments follow: residues 14-34 (VIDL…VTSF) and 81-101 (GVFL…FLVV).

Belongs to the MscL family. As to quaternary structure, homopentamer.

Its subcellular location is the cell membrane. Channel that opens in response to stretch forces in the membrane lipid bilayer. May participate in the regulation of osmotic pressure changes within the cell. This chain is Large-conductance mechanosensitive channel, found in Syntrophomonas wolfei subsp. wolfei (strain DSM 2245B / Goettingen).